The following is an 865-amino-acid chain: Adenylate cyclase (865 aa).

The tract at residues 1-540 (MYLYIETLKQ…DISSHFPIRL (540 aa)) is catalytic. A regulatory region spans residues 546 to 865 (KALYSPCEIR…FNDYQAVHHH (320 aa)).

Belongs to the adenylyl cyclase class-1 family.

The protein localises to the cytoplasm. The catalysed reaction is ATP = 3',5'-cyclic AMP + diphosphate. This Proteus mirabilis protein is Adenylate cyclase (cya).